The chain runs to 766 residues: Probable beta-glucosidase K (766 aa).

Asparagine 19 carries an N-linked (GlcNAc...) asparagine glycan. Residue aspartate 196 is part of the active site. N-linked (GlcNAc...) asparagine glycosylation is found at asparagine 288, asparagine 453, and asparagine 748. One can recognise a PA14 domain in the interval 369 to 528; sequence EGQPGLGMRF…DPERAIARAV (160 aa). The interval 726–766 is disordered; it reads LGRRGRSGSSPAVYRGRSNNVVNRTSHQGAQRISKGGFAAR. Positions 742 to 756 are enriched in polar residues; the sequence is RSNNVVNRTSHQGAQ.

Belongs to the glycosyl hydrolase 3 family.

The protein resides in the secreted. The enzyme catalyses Hydrolysis of terminal, non-reducing beta-D-glucosyl residues with release of beta-D-glucose.. The protein operates within glycan metabolism; cellulose degradation. Beta-glucosidases are one of a number of cellulolytic enzymes involved in the degradation of cellulosic biomass. Catalyzes the last step releasing glucose from the inhibitory cellobiose. This chain is Probable beta-glucosidase K (bglK), found in Aspergillus fumigatus (strain CBS 144.89 / FGSC A1163 / CEA10) (Neosartorya fumigata).